Here is a 218-residue protein sequence, read N- to C-terminus: Ras-related protein RABA5e (218 aa).

A GTP-binding site is contributed by 19–26; sequence GDSAVGKS. An Effector region motif is present at residues 41-49; the sequence is SKATIGVEF. Residues 67-71, 125-128, and 155-156 contribute to the GTP site; these read DTAGQ, NKCD, and SA. Residues Cys214 and Cys215 are each lipidated (S-geranylgeranyl cysteine). Cys215 bears the Cysteine methyl ester mark. A propeptide spans 216-218 (removed in mature form); it reads SST.

The protein belongs to the small GTPase superfamily. Rab family.

Its subcellular location is the cell membrane. Intracellular vesicle trafficking and protein transport. This is Ras-related protein RABA5e (RABA5E) from Arabidopsis thaliana (Mouse-ear cress).